The primary structure comprises 162 residues: UPF0178 protein Rsph17029_2512 (162 aa).

This sequence belongs to the UPF0178 family.

The chain is UPF0178 protein Rsph17029_2512 from Cereibacter sphaeroides (strain ATCC 17029 / ATH 2.4.9) (Rhodobacter sphaeroides).